The chain runs to 396 residues: G-protein coupled receptor 84 (396 aa).

The Extracellular portion of the chain corresponds to 1 to 26; that stretch reads MWNASDVNFSCYHESVLGYRYVAVSW. N3 and N8 each carry an N-linked (GlcNAc...) asparagine glycan. Residues 27–47 traverse the membrane as a helical segment; the sequence is GIVVAVTGTVGNVLTLLALAI. Topologically, residues 48–57 are cytoplasmic; that stretch reads QPKLRTRFNL. The helical transmembrane segment at 58-78 threads the bilayer; it reads LIANLTVADLLYCTLLQPFSV. Over 79-94 the chain is Extracellular; it reads DTYLHLHWRTGATFCQ. The helical transmembrane segment at 95–115 threads the bilayer; it reads IFGFLLFVSNSVSILTLCLIA. Residues 116-144 are Cytoplasmic-facing; it reads LGRYLLIAHPKLFPQVFSAKGIVLALVST. The helical transmembrane segment at 145–165 threads the bilayer; sequence WVVAVASFAPLWPIYILVPVV. Over 166–180 the chain is Extracellular; the sequence is CTCSFDRIRGQPYTT. Residues 181–201 traverse the membrane as a helical segment; it reads ILMGIYFVVGLSSVGVFYCLI. Residues 202–320 lie on the Cytoplasmic side of the membrane; sequence HQQVKRAAQA…PSEFGKVTRM (119 aa). S221 and S224 each carry phosphoserine. The interval 243 to 310 is disordered; sequence SGLASGGPSE…TKGAQRAQDS (68 aa). 2 positions are modified to phosphothreonine: T263 and T264. Residues 321–341 form a helical membrane-spanning segment; it reads CFAVFLCFTLSYIPFLLLNIL. The Extracellular segment spans residues 342 to 352; sequence DAKVQAPRVVH. The helical transmembrane segment at 353–373 threads the bilayer; sequence MLAANLTWLNGCINPVLYAAM. The Cytoplasmic segment spans residues 374–396; the sequence is NRQFRQAYGSLLRRGPQSFHRFH.

The protein belongs to the G-protein coupled receptor 1 family. Interacts with ARRB2 and ARR3. Post-translationally, phosphorylated by a subset of GPR84-activating ligands. Constitutively phosphorylated at Ser-221 and Ser-224 in the absence of 2-HTP. By contrast, Thr-263 and Thr-264 are phosphorylated only following prior cell treatment with 2-HTP.

The protein resides in the cell membrane. Functionally, g protein-coupled receptor that responds endogenously to dietary fatty acids or nutrient, specifically medium-chain free fatty acid (FFA) with carbon chain lengths of C9 to C14. Capric acid (C10:0), undecanoic acid (C11:0) and lauric acid (C12:0) are the most potent agonists. In immune cells, functions as a pro-inflammatory receptor via 6-OAU and promotes the expression of pro-inflammatory mediators such as TNFalpha, IL-6 and IL-12B as well as stimulating chemotactic responses through activation of signaling mediators AKT, ERK and NF-kappa-B. In addition, triggers increased bacterial adhesion and phagocytosis in macrophages and regulates pro-inflammatory function via enhancing NLRP3 inflammasome activation. Also plays an important role in inflammation by modulating neutrophil functions. Mechanistically, promotes neutrophil chemotaxis, reactive oxygen species (ROS) production and degranulation via LYN-AKT/ERK pathway. To regulate ROS, communicates with the two formyl peptide receptors FPR2 and FPR1 to control the NADPH oxidase activity in neutrophils. In Bos taurus (Bovine), this protein is G-protein coupled receptor 84 (GPR84).